We begin with the raw amino-acid sequence, 234 residues long: Cell polarity protein alp11 (234 aa).

The Ubiquitin-like domain maps to Ile-4–His-88. The 43-residue stretch at Val-174–Arg-216 folds into the CAP-Gly domain. The residue at position 213 (Ser-213) is a Phosphoserine.

The protein belongs to the TBCB family. In terms of assembly, binds to monomeric alpha-tubulin. Interacts with alp21.

The protein resides in the cytoplasm. The protein localises to the cytoskeleton. Its function is as follows. Required for microtubule function and cell polarity. Involved in the proper folding of alpha-tubulin. This is Cell polarity protein alp11 (alp11) from Schizosaccharomyces pombe (strain 972 / ATCC 24843) (Fission yeast).